A 363-amino-acid polypeptide reads, in one-letter code: Phosphoserine aminotransferase (363 aa).

L-glutamate is bound at residue arginine 42. Pyridoxal 5'-phosphate contacts are provided by residues 76–77 (GR), tryptophan 102, threonine 156, aspartate 175, and glutamine 198. The residue at position 199 (lysine 199) is an N6-(pyridoxal phosphate)lysine. A pyridoxal 5'-phosphate-binding site is contributed by 240–241 (NT).

It belongs to the class-V pyridoxal-phosphate-dependent aminotransferase family. SerC subfamily. In terms of assembly, homodimer. Pyridoxal 5'-phosphate is required as a cofactor.

It is found in the cytoplasm. It carries out the reaction O-phospho-L-serine + 2-oxoglutarate = 3-phosphooxypyruvate + L-glutamate. The enzyme catalyses 4-(phosphooxy)-L-threonine + 2-oxoglutarate = (R)-3-hydroxy-2-oxo-4-phosphooxybutanoate + L-glutamate. It participates in amino-acid biosynthesis; L-serine biosynthesis; L-serine from 3-phospho-D-glycerate: step 2/3. The protein operates within cofactor biosynthesis; pyridoxine 5'-phosphate biosynthesis; pyridoxine 5'-phosphate from D-erythrose 4-phosphate: step 3/5. Its function is as follows. Catalyzes the reversible conversion of 3-phosphohydroxypyruvate to phosphoserine and of 3-hydroxy-2-oxo-4-phosphonooxybutanoate to phosphohydroxythreonine. This Shewanella denitrificans (strain OS217 / ATCC BAA-1090 / DSM 15013) protein is Phosphoserine aminotransferase.